A 29-amino-acid chain; its full sequence is Cytochrome b6-f complex subunit 8 (29 aa).

A helical membrane pass occupies residues 3-23 (TVSLAWAALMVVFTFSLSLVV).

This sequence belongs to the PetN family. The 4 large subunits of the cytochrome b6-f complex are cytochrome b6, subunit IV (17 kDa polypeptide, PetD), cytochrome f and the Rieske protein, while the 4 small subunits are PetG, PetL, PetM and PetN. The complex functions as a dimer.

It is found in the plastid. The protein localises to the chloroplast thylakoid membrane. Component of the cytochrome b6-f complex, which mediates electron transfer between photosystem II (PSII) and photosystem I (PSI), cyclic electron flow around PSI, and state transitions. The sequence is that of Cytochrome b6-f complex subunit 8 from Chloranthus spicatus (Chulantree).